Here is a 473-residue protein sequence, read N- to C-terminus: MAQHDFAPAWLNFPTPPSSTKSSLNFEKHSENFSWTENRYDVNRRRHNSSDGFDSGIGRPNGGNFGRKEKNGWRTHGRNGTENINHRGGYHGGSSRSRSSIFHSGKSQGLHENNIPDNETGRKDDKRERKQFEAEDFPSLNPEYEREPNQNKSLAAGVWEYPPNPKSRTQRMLVIKKGNTKDLQLSGFPVVGNLQSQPVKNGTGPSVYKGLVPKPAAPPTKPTQWKSQTKENKVGTSFPHESTYGVGNFNAFKSTAKNFSPSTTSVKECNRSNSSSPVDKLNQQPRLTKLTRMRTDKKSEFLKALKRDRVEEEHEDESHVGSEKDDDSFNLHNSNSTHQERDINRNFDENEIPQENGNASVISQQIIRSSAFPQTDVLSSSLEAEHRLLKEMGWQEDSENDETCAPLTEDEMREFQVISEQLQKNGLRKNGILKNGLICDFKFGPWKNSTFKPTIENDDTETSSSDTSDDDDV.

5 disordered regions span residues 1–26, 44–163, 196–240, 258–286, and 305–342; these read MAQH…SLNF, RRRH…EYPP, SQPV…SFPH, NFSP…QQPR, and LKRD…QERD. Position 49 is a phosphoserine (Ser-49). Omega-N-methylarginine is present on Arg-87. Over residues 93–107 the composition is skewed to low complexity; the sequence is GSSRSRSSIFHSGKS. Positions 119-133 are enriched in basic and acidic residues; it reads ETGRKDDKRERKQFE. Phosphoserine is present on residues Ser-274, Ser-276, Ser-322, and Ser-381. Basic and acidic residues predominate over residues 305-329; the sequence is LKRDRVEEEHEDESHVGSEKDDDSF. Positions 444–473 are disordered; sequence GPWKNSTFKPTIENDDTETSSSDTSDDDDV. The segment covering 456–473 has biased composition (acidic residues); the sequence is ENDDTETSSSDTSDDDDV.

Belongs to the vasculin family. As to quaternary structure, interacts with GTF2B, GTF2F2, RNA polymerase II and TBP.

The protein localises to the nucleus. Functions as a GC-rich promoter-specific transactivating transcription factor. The polypeptide is Vasculin (GPBP1) (Bos taurus (Bovine)).